We begin with the raw amino-acid sequence, 61 residues long: Large ribosomal subunit protein uL30 (61 aa).

The protein belongs to the universal ribosomal protein uL30 family. In terms of assembly, part of the 50S ribosomal subunit.

The chain is Large ribosomal subunit protein uL30 from Petrotoga mobilis (strain DSM 10674 / SJ95).